Consider the following 276-residue polypeptide: NAD kinase (276 aa).

Asp61 (proton acceptor) is an active-site residue. NAD(+)-binding positions include 61 to 62 (DG), 134 to 135 (ND), Arg145, Lys162, Asp164, Val172, 175 to 180 (TAYSFS), and Gln234.

Belongs to the NAD kinase family. A divalent metal cation is required as a cofactor.

It localises to the cytoplasm. The catalysed reaction is NAD(+) + ATP = ADP + NADP(+) + H(+). Involved in the regulation of the intracellular balance of NAD and NADP, and is a key enzyme in the biosynthesis of NADP. Catalyzes specifically the phosphorylation on 2'-hydroxyl of the adenosine moiety of NAD to yield NADP. This chain is NAD kinase, found in Clostridium perfringens (strain 13 / Type A).